A 1031-amino-acid polypeptide reads, in one-letter code: Putative protein TIC 214 N-terminal part (1031 aa).

Helical transmembrane passes span 11–31 (ILWAQILSWISISGPLILFGL), 68–88 (TLGQLIILISIFYSPLYIMLL), 92–112 (AITLITLPYVLFYWYEIKDLS), 127–147 (GIIQIFLNSFLFQIFNPILLP), 166–186 (SFFVISLFCGWLGGNILLINL), and 212–232 (TFSIIIFVACLSYLGKFPVPF).

Belongs to the TIC214 family. Part of the Tic complex.

Its subcellular location is the plastid. It is found in the chloroplast inner membrane. Functionally, involved in protein precursor import into chloroplasts. May be part of an intermediate translocation complex acting as a protein-conducting channel at the inner envelope. This chain is Putative protein TIC 214 N-terminal part, found in Anthoceros angustus (Hornwort).